A 252-amino-acid chain; its full sequence is Oncostatin-M (252 aa).

Positions 1-25 are cleaved as a signal peptide; that stretch reads MGVLLTQRTLLSLVLALLFPSMASM. Cystine bridges form between Cys-31/Cys-152 and Cys-74/Cys-192. N-linked (GlcNAc...) asparagine glycosylation occurs at Asn-100. Disordered regions lie at residues 162–184 and 213–252; these read TAEPTKAGRGASQPPTPTPASDA and GESPNRSRRHSPHQALRKGVRRTRPSRKGKRLMTRGQLPR. An N-linked (GlcNAc...) asparagine glycan is attached at Asn-217. The span at 218–245 shows a compositional bias: basic residues; the sequence is RSRRHSPHQALRKGVRRTRPSRKGKRLM. Positions 222-252 are excised as a propeptide; sequence HSPHQALRKGVRRTRPSRKGKRLMTRGQLPR.

This sequence belongs to the LIF/OSM family. Propeptide processing is not important for receptor binding activity but may be important growth-inhibitory activity.

Its subcellular location is the secreted. Growth regulator. Inhibits the proliferation of a number of tumor cell lines. Stimulates proliferation of AIDS-KS cells. It regulates cytokine production, including IL-6, G-CSF and GM-CSF from endothelial cells. Uses both type I OSM receptor (heterodimers composed of LIFR and IL6ST) and type II OSM receptor (heterodimers composed of OSMR and IL6ST). Involved in the maturation of fetal hepatocytes, thereby promoting liver development and regeneration. The sequence is that of Oncostatin-M (OSM) from Homo sapiens (Human).